A 271-amino-acid polypeptide reads, in one-letter code: Formamidopyrimidine-DNA glycosylase (271 aa).

Pro2 serves as the catalytic Schiff-base intermediate with DNA. Glu3 (proton donor) is an active-site residue. Lys58 acts as the Proton donor; for beta-elimination activity in catalysis. 3 residues coordinate DNA: His92, Arg111, and Arg152. The segment at 237–271 (YVYGKVQKPCRICNNIITLIRQNGRSTYFCNACQN) adopts an FPG-type zinc-finger fold. Arg261 serves as the catalytic Proton donor; for delta-elimination activity.

It belongs to the FPG family. As to quaternary structure, monomer. Zn(2+) is required as a cofactor.

It catalyses the reaction Hydrolysis of DNA containing ring-opened 7-methylguanine residues, releasing 2,6-diamino-4-hydroxy-5-(N-methyl)formamidopyrimidine.. The catalysed reaction is 2'-deoxyribonucleotide-(2'-deoxyribose 5'-phosphate)-2'-deoxyribonucleotide-DNA = a 3'-end 2'-deoxyribonucleotide-(2,3-dehydro-2,3-deoxyribose 5'-phosphate)-DNA + a 5'-end 5'-phospho-2'-deoxyribonucleoside-DNA + H(+). In terms of biological role, involved in base excision repair of DNA damaged by oxidation or by mutagenic agents. Acts as a DNA glycosylase that recognizes and removes damaged bases. Has a preference for oxidized purines, such as 7,8-dihydro-8-oxoguanine (8-oxoG). Has AP (apurinic/apyrimidinic) lyase activity and introduces nicks in the DNA strand. Cleaves the DNA backbone by beta-delta elimination to generate a single-strand break at the site of the removed base with both 3'- and 5'-phosphates. This is Formamidopyrimidine-DNA glycosylase from Wolbachia pipientis subsp. Culex pipiens (strain wPip).